Here is a 732-residue protein sequence, read N- to C-terminus: Polyphosphate kinase (732 aa).

Residue asparagine 61 coordinates ATP. Arginine 417 and arginine 447 together coordinate Mg(2+). Histidine 477 acts as the Phosphohistidine intermediate in catalysis. Residues tyrosine 510, arginine 606, and histidine 634 each coordinate ATP. The segment at 699-718 is disordered; it reads DGTYRQRQPAPGEAERGTHS.

Belongs to the polyphosphate kinase 1 (PPK1) family. The cofactor is Mg(2+). Post-translationally, an intermediate of this reaction is the autophosphorylated ppk in which a phosphate is covalently linked to a histidine residue through a N-P bond.

It carries out the reaction [phosphate](n) + ATP = [phosphate](n+1) + ADP. In terms of biological role, catalyzes the reversible transfer of the terminal phosphate of ATP to form a long-chain polyphosphate (polyP). The chain is Polyphosphate kinase from Thermosynechococcus vestitus (strain NIES-2133 / IAM M-273 / BP-1).